The following is a 257-amino-acid chain: UPF0246 protein LPC_0782 (257 aa).

It belongs to the UPF0246 family.

The chain is UPF0246 protein LPC_0782 from Legionella pneumophila (strain Corby).